Reading from the N-terminus, the 324-residue chain is MKNVDSDDLVTGTLPKLKSSKEWLEPKPLCFMEVLAKEDTEAAIQSILYKENSVIKELDKYLQHHAFLNARRKEMLYKRWVDCVADPLQKKIIEKVCSHKKIKKRRQGELDGFLKHVNKKGNAFIEHYDPKEYDPFYMSKKDPNFLKVTIPPFHDPLKKAQYDKDNEKRTLLQCETGKIYSIKEFKEVEKVQLHSRFPQISNSRHFITPNEWLKLPTRYIESEFCRRRRLKVKVNFNDCSFDLKPLARAPYLLESQEEEKTVIYKNKGSSFLEREPLCYQEGNNPSAKEAISEGYFSSLSLSQEREEDQDGSPSPRLGLLKLEL.

Belongs to the FAM228 family.

In Homo sapiens (Human), this protein is Protein FAM228B (FAM228B).